A 94-amino-acid chain; its full sequence is Ribonuclease VapC3 (94 aa).

Aspartate 6 lines the Mg(2+) pocket.

It belongs to the PINc/VapC protein family. Mg(2+) is required as a cofactor.

Its function is as follows. Toxic component of a type II toxin-antitoxin (TA) system. An RNase. Its cognate antitoxin is VapB3. This Methanocaldococcus jannaschii (strain ATCC 43067 / DSM 2661 / JAL-1 / JCM 10045 / NBRC 100440) (Methanococcus jannaschii) protein is Ribonuclease VapC3 (vapC3).